A 291-amino-acid polypeptide reads, in one-letter code: Halorhodopsin (291 aa).

Residues 1-30 are Extracellular-facing; it reads MTETLPPVTESAVALQAEVTQRELFEFVLN. The chain crosses the membrane as a helical span at residues 31-56; that stretch reads DPLLASSLYINIALAGLSILLFVFMT. Topologically, residues 57 to 62 are cytoplasmic; that stretch reads RGLDDP. A helical transmembrane segment spans residues 63-86; that stretch reads RAKLIAVSTILVPVVSIASYTGLA. The Extracellular portion of the chain corresponds to 87–120; the sequence is SGLTISVLEMPAGHFAEGSSVMLGGEEVDGVVTM. Residues 121–142 traverse the membrane as a helical segment; that stretch reads WGRYLTWALSTPMILLALGLLA. Residues 143-145 are Cytoplasmic-facing; that stretch reads GSN. Residues 146 to 169 form a helical membrane-spanning segment; that stretch reads ATKLFTAITFDIAMCVTGLAAALT. Topologically, residues 170-172 are extracellular; the sequence is TSS. A helical membrane pass occupies residues 173 to 195; it reads HLMRWFWYAISCACFLVVLYILL. At 196 to 207 the chain is on the cytoplasmic side; sequence VEWAQDAKAAGT. A helical membrane pass occupies residues 208–231; sequence ADMFNTLKLLTVVMWLGYPIVWAL. Over 232–240 the chain is Extracellular; sequence GVEGIAVLP. Residues 241 to 269 form a helical membrane-spanning segment; that stretch reads VGVTSWGYSFLDIVAKYIFAFLLLNYLTS. Position 256 is an N6-(retinylidene)lysine (lysine 256). The Cytoplasmic portion of the chain corresponds to 270 to 291; the sequence is NESVVSGSILDVPSASGTPADD.

The protein belongs to the archaeal/bacterial/fungal opsin family.

The protein localises to the cell membrane. Its function is as follows. Light-driven anion pump. Binding affinity for the anions is in the order, bromide &gt; chloride &gt; nitrate &gt; azide &gt; bromate and binding is pH dependent. This is Halorhodopsin (hop) from Natronomonas pharaonis (Natronobacterium pharaonis).